A 780-amino-acid chain; its full sequence is Ribonucleoside-diphosphate reductase large subunit (780 aa).

Substrate-binding positions include Thr-177, 192-193 (SC), Gly-223, 393-397 (NLCAE), and 595-599 (PTVGS). Cys-193 and Cys-409 are oxidised to a cystine. Asn-393 (proton acceptor) is an active-site residue. Catalysis depends on Cys-395, which acts as the Cysteine radical intermediate. Glu-397 functions as the Proton acceptor in the catalytic mechanism.

It belongs to the ribonucleoside diphosphate reductase large chain family. Heterotetramer composed of a homodimer of the large subunit (R1) and a homodimer of the small subunit (R2). Larger multisubunit protein complex are also active, composed of (R1)n(R2)n.

The catalysed reaction is a 2'-deoxyribonucleoside 5'-diphosphate + [thioredoxin]-disulfide + H2O = a ribonucleoside 5'-diphosphate + [thioredoxin]-dithiol. In terms of biological role, ribonucleoside-diphosphate reductase holoenzyme provides the precursors necessary for viral DNA synthesis. Allows virus growth in non-dividing cells, as well as reactivation from latency in infected hosts. Catalyzes the biosynthesis of deoxyribonucleotides from the corresponding ribonucleotides. This Connochaetes taurinus (Blue wildebeest) protein is Ribonucleoside-diphosphate reductase large subunit.